The following is a 183-amino-acid chain: Oligoribonuclease (183 aa).

An Exonuclease domain is found at 8–171 (LIWIDLEMTG…DDIRDSIHEL (164 aa)). Tyr-129 is an active-site residue.

It belongs to the oligoribonuclease family.

It localises to the cytoplasm. 3'-to-5' exoribonuclease specific for small oligoribonucleotides. This chain is Oligoribonuclease, found in Halorhodospira halophila (strain DSM 244 / SL1) (Ectothiorhodospira halophila (strain DSM 244 / SL1)).